We begin with the raw amino-acid sequence, 273 residues long: Phosphate import ATP-binding protein PstB (273 aa).

Residues 27–268 (VTVRDLNFYY…PSDRRTQDYI (242 aa)) enclose the ABC transporter domain. 59–66 (GPSGCGKS) lines the ATP pocket.

The protein belongs to the ABC transporter superfamily. Phosphate importer (TC 3.A.1.7) family. The complex is composed of two ATP-binding proteins (PstB), two transmembrane proteins (PstC and PstA) and a solute-binding protein (PstS).

The protein localises to the cell inner membrane. It carries out the reaction phosphate(out) + ATP + H2O = ADP + 2 phosphate(in) + H(+). Its function is as follows. Part of the ABC transporter complex PstSACB involved in phosphate import. Responsible for energy coupling to the transport system. This Rhodopseudomonas palustris (strain ATCC BAA-98 / CGA009) protein is Phosphate import ATP-binding protein PstB.